A 416-amino-acid chain; its full sequence is Multifunctional CCA protein (416 aa).

Residues Gly-8 and Arg-11 each contribute to the ATP site. Gly-8 and Arg-11 together coordinate CTP. Residues Asp-21 and Asp-23 each coordinate Mg(2+). ATP-binding residues include Arg-91, Arg-137, and Arg-140. Residues Arg-91, Arg-137, and Arg-140 each coordinate CTP. The region spanning Thr-226–Phe-327 is the HD domain.

It belongs to the tRNA nucleotidyltransferase/poly(A) polymerase family. Bacterial CCA-adding enzyme type 1 subfamily. Monomer. Can also form homodimers and oligomers. Mg(2+) is required as a cofactor. It depends on Ni(2+) as a cofactor.

The catalysed reaction is a tRNA precursor + 2 CTP + ATP = a tRNA with a 3' CCA end + 3 diphosphate. The enzyme catalyses a tRNA with a 3' CCA end + 2 CTP + ATP = a tRNA with a 3' CCACCA end + 3 diphosphate. Catalyzes the addition and repair of the essential 3'-terminal CCA sequence in tRNAs without using a nucleic acid template. Adds these three nucleotides in the order of C, C, and A to the tRNA nucleotide-73, using CTP and ATP as substrates and producing inorganic pyrophosphate. tRNA 3'-terminal CCA addition is required both for tRNA processing and repair. Also involved in tRNA surveillance by mediating tandem CCA addition to generate a CCACCA at the 3' terminus of unstable tRNAs. While stable tRNAs receive only 3'-terminal CCA, unstable tRNAs are marked with CCACCA and rapidly degraded. This is Multifunctional CCA protein from Janthinobacterium sp. (strain Marseille) (Minibacterium massiliensis).